Here is a 233-residue protein sequence, read N- to C-terminus: Type II methyltransferase M.MunI (233 aa).

It belongs to the MT-A70-like family.

It carries out the reaction a 2'-deoxyadenosine in DNA + S-adenosyl-L-methionine = an N(6)-methyl-2'-deoxyadenosine in DNA + S-adenosyl-L-homocysteine + H(+). Its function is as follows. A methylase that recognizes the double-stranded sequence 5'-CAATTG-3', methylates A-3 on both strands, and protects the DNA from cleavage by the MunI endonuclease. This is Type II methyltransferase M.MunI from Mycoplasma sp.